The primary structure comprises 239 residues: Skn-1 dependent zygotic transcript 1 protein (239 aa).

Expressed in mesendodermal precursor cells of embryos.

Its function is as follows. May have a role in mesendoderm development during embryogenesis. This chain is Skn-1 dependent zygotic transcript 1 protein (sdz-1), found in Caenorhabditis elegans.